We begin with the raw amino-acid sequence, 545 residues long: Bifunctional purine biosynthesis protein PurH (545 aa).

The 150-residue stretch at 1 to 150 folds into the MGS-like domain; sequence MTNTNRPIRR…KNHATVAIVT (150 aa).

This sequence belongs to the PurH family.

It carries out the reaction (6R)-10-formyltetrahydrofolate + 5-amino-1-(5-phospho-beta-D-ribosyl)imidazole-4-carboxamide = 5-formamido-1-(5-phospho-D-ribosyl)imidazole-4-carboxamide + (6S)-5,6,7,8-tetrahydrofolate. The enzyme catalyses IMP + H2O = 5-formamido-1-(5-phospho-D-ribosyl)imidazole-4-carboxamide. Its pathway is purine metabolism; IMP biosynthesis via de novo pathway; 5-formamido-1-(5-phospho-D-ribosyl)imidazole-4-carboxamide from 5-amino-1-(5-phospho-D-ribosyl)imidazole-4-carboxamide (10-formyl THF route): step 1/1. It participates in purine metabolism; IMP biosynthesis via de novo pathway; IMP from 5-formamido-1-(5-phospho-D-ribosyl)imidazole-4-carboxamide: step 1/1. The chain is Bifunctional purine biosynthesis protein PurH from Bifidobacterium longum (strain DJO10A).